The following is a 356-amino-acid chain: uncharacterized protein (356 aa).

This is an uncharacterized protein from Saccharolobus islandicus (Sulfolobus islandicus).